The sequence spans 265 residues: Short chain dehydrogenase mdpC (265 aa).

Residues I25, N98, and R131 each contribute to the NADP(+) site. Residues S147 and S148 each act as proton donor in the active site. NADP(+) is bound by residues Y162, K166, and T197. The Proton acceptor role is filled by Y162. The active-site Lowers pKa of active site Tyr is K166.

It belongs to the short-chain dehydrogenases/reductases (SDR) family.

It carries out the reaction 3,8,9,10-tetrahydroxy-6-methyl-1,4-dihydroanthracen-1-one + NADPH + H(+) = (3R)-3,8,9,10-tetrahydroxy-6-methyl-1,2,3,4-tetrahydroanthracen-1-one + NADP(+). It participates in secondary metabolite biosynthesis. Functionally, short chain dehydrogenase; part of the gene cluster that mediates the biosynthesis of monodictyphenone, a prenyl xanthone derivative. The pathway begins with the synthesis of atrochrysone thioester by the polyketide synthase (PKS) mdpG. The atrochrysone carboxyl ACP thioesterase mdpF then breaks the thioester bond and releases the atrochrysone carboxylic acid from mdpG. The atrochrysone carboxylic acid is then converted to atrochrysone which is further transformed into emodin anthrone. The next step is performed by the anthrone oxygenase mdpH that catalyzes the oxidation of emodinanthrone to emodin. Emodin is further modified to yield monodictyphenone via several steps involving mdpB, mdpC mdpJ, mdpK and mdpL. The short chain dehydrogenase mdpC converts the tautomers of emodin hydroquinone into the 3-hydroxy-3,4-dihydroan-thracen-1(2H)-one derivative. These enzymes with xptA, xptB and xptC are also proposed to be involved in the synthesis of shamixanthone from emodin. Especially, direct reduction of emodin by the short chain dehydrogenase mdpC followed by dehydration catalyzed by the scytalone dehydratase-like protein mdpB gives loss of oxygen and formation of chrysophanol intermediate in two simple steps. The chain is Short chain dehydrogenase mdpC from Emericella nidulans (strain FGSC A4 / ATCC 38163 / CBS 112.46 / NRRL 194 / M139) (Aspergillus nidulans).